Reading from the N-terminus, the 124-residue chain is Hydrogenase maturation factor HypA (124 aa).

His-2 is a Ni(2+) binding site. Zn(2+) contacts are provided by Cys-78, Cys-81, Cys-97, and Cys-100.

The protein belongs to the HypA/HybF family.

Functionally, involved in the maturation of [NiFe] hydrogenases. Required for nickel insertion into the metal center of the hydrogenase. In Methanocaldococcus jannaschii (strain ATCC 43067 / DSM 2661 / JAL-1 / JCM 10045 / NBRC 100440) (Methanococcus jannaschii), this protein is Hydrogenase maturation factor HypA.